The following is a 193-amino-acid chain: Recombination protein RecR (193 aa).

The segment at 61–76 (CASCNALSETEVSEIC) adopts a C4-type; degenerate zinc-finger fold. The region spanning 84-170 (SQLCMVLHPR…TFTKIAQGVP (87 aa)) is the Toprim domain.

It belongs to the RecR family.

In terms of biological role, may play a role in DNA repair. It seems to be involved in an RecBC-independent recombinational process of DNA repair. It may act with RecF and RecO. The polypeptide is Recombination protein RecR (Helicobacter pylori (strain J99 / ATCC 700824) (Campylobacter pylori J99)).